Consider the following 276-residue polypeptide: Protein TabB (276 aa).

It belongs to the transferase hexapeptide repeat family. Pyridoxal 5'-phosphate is required as a cofactor.

The sequence is that of Protein TabB (tabB) from Pseudomonas amygdali pv. tabaci (Pseudomonas syringae pv. tabaci).